Reading from the N-terminus, the 322-residue chain is Methionyl-tRNA formyltransferase (322 aa).

Position 113-116 (113-116 (SLLP)) interacts with (6S)-5,6,7,8-tetrahydrofolate.

This sequence belongs to the Fmt family.

It carries out the reaction L-methionyl-tRNA(fMet) + (6R)-10-formyltetrahydrofolate = N-formyl-L-methionyl-tRNA(fMet) + (6S)-5,6,7,8-tetrahydrofolate + H(+). Functionally, attaches a formyl group to the free amino group of methionyl-tRNA(fMet). The formyl group appears to play a dual role in the initiator identity of N-formylmethionyl-tRNA by promoting its recognition by IF2 and preventing the misappropriation of this tRNA by the elongation apparatus. This chain is Methionyl-tRNA formyltransferase, found in Bacteroides thetaiotaomicron (strain ATCC 29148 / DSM 2079 / JCM 5827 / CCUG 10774 / NCTC 10582 / VPI-5482 / E50).